The following is a 412-amino-acid chain: Tryptophan 2,3-dioxygenase (412 aa).

Residues 79 to 83 (FIVVH), tyrosine 146, and arginine 150 each bind substrate. Histidine 346 contributes to the heme binding site. Threonine 360 contacts substrate.

It belongs to the tryptophan 2,3-dioxygenase family. As to quaternary structure, homotetramer. It depends on heme as a cofactor.

The enzyme catalyses L-tryptophan + O2 = N-formyl-L-kynurenine. It participates in amino-acid degradation; L-tryptophan degradation via kynurenine pathway; L-kynurenine from L-tryptophan: step 1/2. Functionally, heme-dependent dioxygenase that catalyzes the oxidative cleavage of the L-tryptophan (L-Trp) pyrrole ring and converts L-tryptophan to N-formyl-L-kynurenine. Catalyzes the oxidative cleavage of the indole moiety. The sequence is that of Tryptophan 2,3-dioxygenase from Sorangium cellulosum (strain So ce56) (Polyangium cellulosum (strain So ce56)).